Here is a 144-residue protein sequence, read N- to C-terminus: MIKFFLMVNKQGQTRLSKYYEHVDINKRTLLETEVIKSCLSRSNEQCSFIEYKDFKLIYRQYAALFIVVGVNDTENEMAIYEFIHNFVEVLDEYFSRVSELDIMFNLDKVHIILDEMVLNGCIVETNRARILAPLLILDKMSES.

Belongs to the adaptor complexes small subunit family. Adaptor protein complex 4 (AP-4) is a heterotetramer composed of two large adaptins (epsilon-type subunit AP4E1 and beta-type subunit AP4B1), a medium adaptin (mu-type subunit AP4M1) and a small adaptin (sigma-type AP4S1). Widely expressed.

It localises to the golgi apparatus. It is found in the trans-Golgi network membrane. Component of the adaptor protein complex 4 (AP-4). Adaptor protein complexes are vesicle coat components involved both in vesicle formation and cargo selection. They control the vesicular transport of proteins in different trafficking pathways. AP-4 forms a non clathrin-associated coat on vesicles departing the trans-Golgi network (TGN) and may be involved in the targeting of proteins from the trans-Golgi network (TGN) to the endosomal-lysosomal system. It is also involved in protein sorting to the basolateral membrane in epithelial cells and the proper asymmetric localization of somatodendritic proteins in neurons. AP-4 is involved in the recognition and binding of tyrosine-based sorting signals found in the cytoplasmic part of cargos, but may also recognize other types of sorting signal. In Homo sapiens (Human), this protein is AP-4 complex subunit sigma-1.